A 746-amino-acid polypeptide reads, in one-letter code: tRNA (cytosine(34)-C(5))-methyltransferase (746 aa).

The segment at 1 to 30 is disordered; sequence MGRNQKQNFFAARKRQKRENGPKRTDRQAQ. The span at 18-30 shows a compositional bias: basic and acidic residues; sequence RENGPKRTDRQAQ. Residues 184 to 190, aspartate 216, aspartate 243, and aspartate 270 each bind S-adenosyl-L-methionine; that span reads CAAPGSK. Catalysis depends on cysteine 323, which acts as the Nucleophile. Disordered regions lie at residues 454 to 475 and 701 to 746; these read QPAA…SVPW and SAEA…VATS. Basic and acidic residues predominate over residues 463-472; sequence ADGKPIEEKS. The span at 704–714 shows a compositional bias: acidic residues; that stretch reads AEADSSGDGDA. Residues 731–746 show a composition bias toward polar residues; the sequence is AETTGTPMDTEVVATS.

It belongs to the class I-like SAM-binding methyltransferase superfamily. RsmB/NOP family. TRM4 subfamily. As to expression, ubiquitously expressed during embryonic development. Some enrichment is observed in the proventriculus area of the foregut and in the hindgut.

The protein resides in the nucleus. The protein localises to the nucleolus. It carries out the reaction cytidine(34) in tRNA precursor + S-adenosyl-L-methionine = 5-methylcytidine(34) in tRNA precursor + S-adenosyl-L-homocysteine + H(+). Functionally, RNA methyltransferase that methylates tRNAs. Methylates cytosine to 5-methylcytosine (m5C) at position 34 of intron-containing tRNA(Leu)(CAA) precursors. Required for short-term memory. This is tRNA (cytosine(34)-C(5))-methyltransferase from Drosophila melanogaster (Fruit fly).